A 382-amino-acid polypeptide reads, in one-letter code: Guanylate kinase 1 (382 aa).

The Guanylate kinase-like domain maps to 128-310; that stretch reads QKPIVISGPS…CYENLKKLLS (183 aa). 135–142 is a binding site for ATP; that stretch reads GPSGVGKG. Catalysis depends on residues R168, R261, and R272. ATP contacts are provided by N295 and D296.

It belongs to the guanylate kinase family. As to quaternary structure, monomer.

The protein resides in the cytoplasm. Its subcellular location is the nucleus. The catalysed reaction is GMP + ATP = GDP + ADP. Functionally, essential for recycling GMP and indirectly, cGMP. This Oryza sativa subsp. japonica (Rice) protein is Guanylate kinase 1 (GK1).